We begin with the raw amino-acid sequence, 257 residues long: Nopaline permease ATP-binding protein P (257 aa).

An ABC transporter domain is found at 8 to 253; the sequence is LVAEDVHKNF…PTSPRCRAFL (246 aa). Residue 40–47 coordinates ATP; sequence GSSGSGKS.

The protein belongs to the ABC transporter superfamily.

It is found in the cell inner membrane. Functionally, component of the nopaline active transport system probably consisting of four subunits: Q, M, P and T. This system is also capable of transporting octopine provided that catabolic functions are induced with nopaline. This is Nopaline permease ATP-binding protein P (nocP) from Agrobacterium fabrum (strain C58 / ATCC 33970) (Agrobacterium tumefaciens (strain C58)).